The sequence spans 327 residues: 4-hydroxyproline 2-epimerase (327 aa).

Residue Cys-85 is the Proton acceptor of the active site. Residues Gly-86–His-87, His-205, and Asp-231 contribute to the substrate site. The active-site Proton donor is the Cys-235. Gly-236–Thr-237 contributes to the substrate binding site.

The protein belongs to the proline racemase family.

It carries out the reaction trans-4-hydroxy-L-proline = cis-4-hydroxy-D-proline. In terms of biological role, catalyzes the epimerization of trans-4-hydroxy-L-proline (t4LHyp) to cis-4-hydroxy-D-proline (c4DHyp). Displays no proline racemase activity. This chain is 4-hydroxyproline 2-epimerase, found in Roseibium alexandrii (strain DSM 17067 / NCIMB 14079 / DFL-11) (Labrenzia alexandrii).